The following is a 771-amino-acid chain: Choline transporter-like protein 1 (771 aa).

Residues 96-116 traverse the membrane as a helical segment; sequence FLFFVFLCGWVVVAGFGIMWG. 2 N-linked (GlcNAc...) asparagine glycosylation sites follow: Asn-141 and Asn-259. The next 4 helical transmembrane spans lie at 312–332, 335–355, 392–412, and 441–461; these read WWQTLILIFAAGILSFIWTVI, LLGSLIIWLSILIVLVALGFG, LVVAIATSVLLLIFLLVILFI, and LFPFLLHIGVFALWGSIAIWL. Asn-480 carries an N-linked (GlcNAc...) asparagine glycan. A run of 5 helical transmembrane segments spans residues 514 to 534, 566 to 586, 603 to 623, 662 to 682, and 701 to 721; these read LFAFFWLSCFVTALGDIALAG, LGSIAFGSLIIAIVKIIRVLL, WFLMCLKCCFWCLEVFFKFLT, AGILLFLGKSMITLGMGILSF, and YYFVPIVIVVIGSYFMADLFF.

It belongs to the CTL (choline transporter-like) family.

It is found in the membrane. In Caenorhabditis elegans, this protein is Choline transporter-like protein 1 (chtl-1).